The primary structure comprises 96 residues: MF6 protein (96 aa).

This is MF6 protein from Myxoma virus (strain Uriarra) (MYXV).